The sequence spans 90 residues: Large ribosomal subunit protein bL27 (90 aa).

Positions 1–22 (MAHKKAGGSTRNGRDSNPKMLG) are disordered.

This sequence belongs to the bacterial ribosomal protein bL27 family.

The chain is Large ribosomal subunit protein bL27 from Coxiella burnetii (strain CbuK_Q154) (Coxiella burnetii (strain Q154)).